The primary structure comprises 374 residues: Methylthioribose-1-phosphate isomerase (374 aa).

Aspartate 256 acts as the Proton donor in catalysis.

The protein belongs to the eIF-2B alpha/beta/delta subunits family. MtnA subfamily.

It is found in the cytoplasm. It localises to the nucleus. The enzyme catalyses 5-(methylsulfanyl)-alpha-D-ribose 1-phosphate = 5-(methylsulfanyl)-D-ribulose 1-phosphate. Its pathway is amino-acid biosynthesis; L-methionine biosynthesis via salvage pathway; L-methionine from S-methyl-5-thio-alpha-D-ribose 1-phosphate: step 1/6. In terms of biological role, catalyzes the interconversion of methylthioribose-1-phosphate (MTR-1-P) into methylthioribulose-1-phosphate (MTRu-1-P). The polypeptide is Methylthioribose-1-phosphate isomerase (Leishmania braziliensis).